Here is a 382-residue protein sequence, read N- to C-terminus: Mannitol-1-phosphate 5-dehydrogenase (382 aa).

NAD(+) is bound at residue 3 to 14 (VLHFGAGNIGRG).

This sequence belongs to the mannitol dehydrogenase family.

The enzyme catalyses D-mannitol 1-phosphate + NAD(+) = beta-D-fructose 6-phosphate + NADH + H(+). This chain is Mannitol-1-phosphate 5-dehydrogenase, found in Sodalis glossinidius (strain morsitans).